A 1136-amino-acid polypeptide reads, in one-letter code: Solute carrier family 12 member 2 (1136 aa).

Disordered regions lie at residues 1–73 (MSAS…SVSG) and 91–121 (PDAAPAETAQNGDTVMSEGSLHSSTGGQQHH). The Cytoplasmic portion of the chain corresponds to 1–208 (MSASPPISAG…SESKGVVKFG (208 aa)). Residues Thr-125, Thr-129, Thr-134, Thr-139, and Thr-152 each carry the phosphothreonine modification. A discontinuously helical membrane pass occupies residues 209 to 234 (WIKGVLVRCMLNIWGVMLFIRMTWIV). A Na(+)-binding site is contributed by Leu-219. 2 residues coordinate K(+): Asn-220 and Ile-221. Trp-222 contacts Na(+). 3 residues coordinate chloride: Gly-223, Val-224, and Met-225. Residues 235–238 (GQAG) are Extracellular-facing. A helical membrane pass occupies residues 239–261 (IAYSCIIVIMATVVTTITGCSTS). Residues 262–285 (AIATNGFVRGGGAYYLISRSLGPE) lie on the Cytoplasmic side of the membrane. Residues 286 to 314 (FGGSIGLIFAFANAVAVAMYVVGFAETVV) traverse the membrane as a helical segment. Residue Phe-294 coordinates chloride. Residue Tyr-305 coordinates K(+). The Extracellular portion of the chain corresponds to 315–327 (ELLMDSGLLMIDQ). The next 2 membrane-spanning stretches (helical) occupy residues 328-351 (TNDIRVIGTITVILLLGISVAGME) and 352-376 (WEAKAQIFLLVILITAIFNYFIGSF). The Extracellular portion of the chain corresponds to 377–407 (IAVDSKKKFGFFSYDAGILAENFGPDFRGQT). A discontinuously helical membrane pass occupies residues 408-427 (FFSVFSIFFPAATGILAGAN). Positions 417, 418, and 420 each coordinate K(+). Positions 417 and 418 each coordinate chloride. 2 residues coordinate chloride: Gly-421 and Ile-422. Topologically, residues 428–438 (ISGDLADPQMA) are cytoplasmic. A helical transmembrane segment spans residues 439–462 (IPKGTLLAILITGLVYVGVAISAG). Over 463–523 (ACIVRDATGI…DFQVMSVVSG (61 aa)) the chain is Extracellular. N-linked (GlcNAc...) asparagine glycans are attached at residues Asn-475 and Asn-481. Cys-496 and Cys-507 are joined by a disulfide. Residues 524–551 (FSPLISAGIFSATLSSALASLVSAPKVF) form a helical membrane-spanning segment. Residues Ala-535, Ser-538, and Ser-539 each contribute to the Na(+) site. Topologically, residues 552-576 (QALCKDNIYPGIAIFGKGYGKNNEP) are cytoplasmic. 2 helical membrane-spanning segments follow: residues 577 to 595 (LRGYFLTFGIALAFILIAE) and 596 to 619 (LNVIAPIISNFFLASYALINFSVF). Chloride-binding residues include Phe-607 and Tyr-611. The Cytoplasmic segment spans residues 620–636 (HASLANSPGWRPSFKYY). 2 consecutive transmembrane segments (helical) span residues 637–656 (NMWASLAGAILCCVVMFIIN) and 657–672 (WWAALLTNVIVLSLYI). The Cytoplasmic segment spans residues 673–1136 (YVSYKKPDVN…NHQSVLTFYS (464 aa)). The scissor helix stretch occupies residues 689 to 702 (ALTYHQALTHSLQL). The segment at 875 to 921 (SKDSDGDSSKPSSKATSVQNSPAVQKDEDDDGKAHTQPLLKKDKKSP) is disordered. Thr-1059 is subject to Phosphothreonine.

The protein belongs to the SLC12A transporter family. In terms of assembly, homodimer; adopts a domain-swap conformation at the scissor helices connecting the transmembrane domain and C-terminal domain. In terms of processing, phosphorylated at Thr-125, Thr-129 and Thr-134 by OXSR1/OSR1 and STK39/SPAK downstream of WNK kinases (WNK1, WNK2, WNK3 or WNK4), promoting its activity.

It is found in the basolateral cell membrane. The catalysed reaction is K(+)(out) + 2 chloride(out) + Na(+)(out) = K(+)(in) + 2 chloride(in) + Na(+)(in). Activated following phosphorylation by OXSR1/OSR1 and STK39/SPAK. Inhibited by bumetanide. Cation-chloride cotransporter which mediates the electroneutral transport of chloride, potassium and/or sodium ions across the membrane. Plays a vital role in the regulation of ionic balance and cell volume. Important for maintenance of endolymph volume in the otic vesicle, probably by regulating ion homeostasis. Also plays a role in normal development of the swim bladder. The protein is Solute carrier family 12 member 2 of Danio rerio (Zebrafish).